Consider the following 1362-residue polypeptide: Leptomycin B resistance protein pmd1 (1362 aa).

A disordered region spans residues 1–45; the sequence is MSLHSKKSTSTVKDNEHSLDLSIKSIPSNEKNFSTEKSENEASES. The Cytoplasmic portion of the chain corresponds to 1-91; sequence MSLHSKKSTS…RILSYADKWD (91 aa). A compositionally biased stretch (basic and acidic residues) spans 33–45; it reads FSTEKSENEASES. Helical transmembrane passes span 92–115, 138–162, 220–237, 244–264, 320–346, and 354–374; these read IMLQ…MSLV, TVDH…IYTV, LVFF…IAFI, LILS…VPFI, AIAM…WEGG, and LDVS…YSLA. Residues 95–385 form the ABC transmembrane type-1 1 domain; that stretch reads QLAGTITGIG…ISPKMQSFVS (291 aa). Topologically, residues 375–788 are cytoplasmic; that stretch reads NISPKMQSFV…LWFIHSFVRT (414 aa). One can recognise an ABC transporter 1 domain in the interval 420–665; the sequence is IELKNIRFVY…NGAYARLVEA (246 aa). 455 to 462 is an ATP binding site; the sequence is GASGSGKS. Residues 748-768 are disordered; sequence LPPADVGELNEEPKKSKKSKK. A run of 6 helical transmembrane segments spans residues 789 to 809, 835 to 859, 916 to 935, 940 to 957, 1022 to 1040, and 1054 to 1072; these read MIEI…GAAY, VNVF…SNFA, LGTF…LSLA, LGLV…AGYY, GLFF…ALTF, and IVQF…QQAG. Residues 795–1083 enclose the ABC transmembrane type-1 2 domain; sequence LLIGILASMI…FFGYSADVTK (289 aa). At 1073-1362 the chain is on the cytoplasmic side; that stretch reads QFFGYSADVT…LVVEQGLNKA (290 aa). One can recognise an ABC transporter 2 domain in the interval 1119 to 1356; that stretch reads IEFRQVEFSY…RGRYYELVVE (238 aa). 1154-1161 is an ATP binding site; that stretch reads GSSGCGKS.

It belongs to the ABC transporter superfamily. ABCB family. Multidrug resistance exporter (TC 3.A.1.201) subfamily.

The protein resides in the membrane. Functionally, may be a transmembrane transporter of the mating factor, namely P-factor or M-factor. Confers resistance to leptomycin B and to several other antifungal drugs. The polypeptide is Leptomycin B resistance protein pmd1 (pmd1) (Schizosaccharomyces pombe (strain 972 / ATCC 24843) (Fission yeast)).